The primary structure comprises 565 residues: Protein unc-87 (565 aa).

Over residues 1–27 (MLSFNNTTSASSFQSASSRYLMSSSSS) the composition is skewed to low complexity. Disordered regions lie at residues 1–83 (MLSF…TTNS) and 237–262 (IPSQ…RNTN). A compositionally biased stretch (basic and acidic residues) spans 54–69 (EALERLRPNTASRERN). 3 Calponin-like repeats span residues 237-262 (IPSQ…RNTN), 285-310 (VRLQ…RDVC), and 338-363 (VRLQ…RRET). Residues 250–262 (KLMTNFGTPRNTN) show a composition bias toward polar residues. The segment covering 369-381 (SKHPEYDHEKPDQ) has biased composition (basic and acidic residues). The tract at residues 369 to 400 (SKHPEYDHEKPDQSEIPLQSGTNKFASQKGMT) is disordered. A compositionally biased stretch (polar residues) spans 384–398 (IPLQSGTNKFASQKG). Calponin-like repeat units follow at residues 384–409 (IPLQ…RRET), 431–456 (IPSQ…RWEV), 472–497 (VRLQ…RNTT), and 517–542 (IPSQ…RDVK).

This sequence belongs to the calponin family. Monomer. Interacts with F-actin. Interacts with myosin. In terms of tissue distribution, expressed in the body wall muscles. Isoform a: Expression in the pharynx, anal depressor muscle, uterine muscle, vulva and unidentified neurons in the head and the ventral region. Isoform b: Expression in the body wall muscles, spermatheca, vulva and in the myoepithelial sheath.

It is found in the cytoplasm. Its subcellular location is the myofibril. The protein localises to the sarcomere. The protein resides in the i band. Its function is as follows. Thin filament-associated protein that is implicated in actin bundling and actin filament dynamics. Exhibits F-actin cross-linking activity. Required for the maintenance of sarcomeric actin organization in striated muscles. Competes with unc-60 isoform b for actin binding and protects actin filaments from depolymerization by unc-60, thereby contributing to actin filament stability. Cooperates with myosin to form actomyosin bundles and inhibits actomyosin ATPase activity and actomyosin motility. Might protect the myofilaments from mechanical stress. Acts as a negative regulator of myosin-dependent contractility of smooth muscle-like cells in the somatic gonad. The chain is Protein unc-87 (unc-87) from Caenorhabditis elegans.